We begin with the raw amino-acid sequence, 438 residues long: uncharacterized protein (438 aa).

The residue at position 273 (lysine 273) is an N6-(pyridoxal phosphate)lysine.

It belongs to the class-III pyridoxal-phosphate-dependent aminotransferase family. Requires pyridoxal 5'-phosphate as cofactor.

It localises to the mitochondrion. This is an uncharacterized protein from Schizosaccharomyces pombe (strain 972 / ATCC 24843) (Fission yeast).